Reading from the N-terminus, the 183-residue chain is uncharacterized protein (183 aa).

A signal peptide spans 1–17; sequence MVLFILVLYTCIQDGNG.

This is an uncharacterized protein from Saccharomyces cerevisiae (strain ATCC 204508 / S288c) (Baker's yeast).